The primary structure comprises 212 residues: Pyridoxine/pyridoxamine 5'-phosphate oxidase (212 aa).

Substrate is bound by residues 8–11 and Lys-66; that span reads RREY. FMN-binding positions include 61–66, 76–77, Arg-82, Lys-83, and Gln-105; these read RIVLLK and FT. Positions 123, 127, and 131 each coordinate substrate. FMN is bound by residues 140-141 and Trp-185; that span reads QS. A substrate-binding site is contributed by 191 to 193; the sequence is RLH. Arg-195 lines the FMN pocket.

It belongs to the pyridoxamine 5'-phosphate oxidase family. As to quaternary structure, homodimer. The cofactor is FMN.

The catalysed reaction is pyridoxamine 5'-phosphate + O2 + H2O = pyridoxal 5'-phosphate + H2O2 + NH4(+). The enzyme catalyses pyridoxine 5'-phosphate + O2 = pyridoxal 5'-phosphate + H2O2. The protein operates within cofactor metabolism; pyridoxal 5'-phosphate salvage; pyridoxal 5'-phosphate from pyridoxamine 5'-phosphate: step 1/1. Its pathway is cofactor metabolism; pyridoxal 5'-phosphate salvage; pyridoxal 5'-phosphate from pyridoxine 5'-phosphate: step 1/1. Catalyzes the oxidation of either pyridoxine 5'-phosphate (PNP) or pyridoxamine 5'-phosphate (PMP) into pyridoxal 5'-phosphate (PLP). This Shewanella frigidimarina (strain NCIMB 400) protein is Pyridoxine/pyridoxamine 5'-phosphate oxidase.